A 347-amino-acid chain; its full sequence is Phenylalanine--tRNA ligase alpha subunit (347 aa).

Glu-261 contacts Mg(2+).

This sequence belongs to the class-II aminoacyl-tRNA synthetase family. Phe-tRNA synthetase alpha subunit type 1 subfamily. Tetramer of two alpha and two beta subunits. Mg(2+) serves as cofactor.

Its subcellular location is the cytoplasm. It catalyses the reaction tRNA(Phe) + L-phenylalanine + ATP = L-phenylalanyl-tRNA(Phe) + AMP + diphosphate + H(+). This is Phenylalanine--tRNA ligase alpha subunit from Streptococcus thermophilus (strain CNRZ 1066).